The sequence spans 39 residues: MEFATNRVTVNDSRSALSSTLLLSLIMSATLLEYSLSMT.

The chain crosses the membrane as a helical span at residues 15–37 (SALSSTLLLSLIMSATLLEYSLS).

It localises to the cell inner membrane. Required for microcin H47 production. Possibly involved in a regulatory loop modulating its own expression and that of MchI and MchB. The polypeptide is Protein MchX (mchX) (Escherichia coli).